The sequence spans 568 residues: Dihydroxy-acid dehydratase (568 aa).

C59 is a binding site for [2Fe-2S] cluster. D91 is a Mg(2+) binding site. C132 is a [2Fe-2S] cluster binding site. Mg(2+) is bound by residues D133 and K134. Residue K134 is modified to N6-carboxylysine. A [2Fe-2S] cluster-binding site is contributed by C204. E456 contributes to the Mg(2+) binding site. S482 (proton acceptor) is an active-site residue.

Belongs to the IlvD/Edd family. Homodimer. Requires [2Fe-2S] cluster as cofactor. Mg(2+) serves as cofactor.

The enzyme catalyses (2R)-2,3-dihydroxy-3-methylbutanoate = 3-methyl-2-oxobutanoate + H2O. It carries out the reaction (2R,3R)-2,3-dihydroxy-3-methylpentanoate = (S)-3-methyl-2-oxopentanoate + H2O. It functions in the pathway amino-acid biosynthesis; L-isoleucine biosynthesis; L-isoleucine from 2-oxobutanoate: step 3/4. The protein operates within amino-acid biosynthesis; L-valine biosynthesis; L-valine from pyruvate: step 3/4. Functionally, functions in the biosynthesis of branched-chain amino acids. Catalyzes the dehydration of (2R,3R)-2,3-dihydroxy-3-methylpentanoate (2,3-dihydroxy-3-methylvalerate) into 2-oxo-3-methylpentanoate (2-oxo-3-methylvalerate) and of (2R)-2,3-dihydroxy-3-methylbutanoate (2,3-dihydroxyisovalerate) into 2-oxo-3-methylbutanoate (2-oxoisovalerate), the penultimate precursor to L-isoleucine and L-valine, respectively. The protein is Dihydroxy-acid dehydratase of Verminephrobacter eiseniae (strain EF01-2).